The chain runs to 393 residues: NAD(P)H-quinone oxidoreductase subunit H, chloroplastic (393 aa).

This sequence belongs to the complex I 49 kDa subunit family. As to quaternary structure, NDH is composed of at least 16 different subunits, 5 of which are encoded in the nucleus.

It localises to the plastid. It is found in the chloroplast thylakoid membrane. The enzyme catalyses a plastoquinone + NADH + (n+1) H(+)(in) = a plastoquinol + NAD(+) + n H(+)(out). The catalysed reaction is a plastoquinone + NADPH + (n+1) H(+)(in) = a plastoquinol + NADP(+) + n H(+)(out). Functionally, NDH shuttles electrons from NAD(P)H:plastoquinone, via FMN and iron-sulfur (Fe-S) centers, to quinones in the photosynthetic chain and possibly in a chloroplast respiratory chain. The immediate electron acceptor for the enzyme in this species is believed to be plastoquinone. Couples the redox reaction to proton translocation, and thus conserves the redox energy in a proton gradient. This Psilotum nudum (Whisk fern) protein is NAD(P)H-quinone oxidoreductase subunit H, chloroplastic.